The primary structure comprises 139 residues: Large-conductance mechanosensitive channel (139 aa).

Transmembrane regions (helical) follow at residues 16–36 and 83–103; these read VIDL…VDSL and GQFI…FVAV.

It belongs to the MscL family. In terms of assembly, homopentamer.

It is found in the cell inner membrane. Functionally, channel that opens in response to stretch forces in the membrane lipid bilayer. May participate in the regulation of osmotic pressure changes within the cell. This Aromatoleum aromaticum (strain DSM 19018 / LMG 30748 / EbN1) (Azoarcus sp. (strain EbN1)) protein is Large-conductance mechanosensitive channel.